The following is a 100-amino-acid chain: NADH-quinone oxidoreductase subunit K 2 (100 aa).

3 helical membrane-spanning segments follow: residues 4 to 24 (LNNY…GVLV), 29 to 49 (IVIF…FIAF), and 60 to 80 (IFVF…LALM).

This sequence belongs to the complex I subunit 4L family. NDH-1 is composed of 14 different subunits. Subunits NuoA, H, J, K, L, M, N constitute the membrane sector of the complex.

It is found in the cell inner membrane. It catalyses the reaction a quinone + NADH + 5 H(+)(in) = a quinol + NAD(+) + 4 H(+)(out). Its function is as follows. NDH-1 shuttles electrons from NADH, via FMN and iron-sulfur (Fe-S) centers, to quinones in the respiratory chain. The immediate electron acceptor for the enzyme in this species is believed to be ubiquinone. Couples the redox reaction to proton translocation (for every two electrons transferred, four hydrogen ions are translocated across the cytoplasmic membrane), and thus conserves the redox energy in a proton gradient. This is NADH-quinone oxidoreductase subunit K 2 from Geotalea uraniireducens (strain Rf4) (Geobacter uraniireducens).